The following is a 708-amino-acid chain: Killer toxin KHS (708 aa).

The first 27 residues, 1–27 (MPRFAIIFALLIAYSLFLSTLFTGSIP), serve as a signal peptide directing secretion. Positions 28 to 36 (DRANTVTSN) are excised as a propeptide. 3 consecutive transmembrane segments (helical) span residues 77–97 (VCTIAGAVLATAAVIVAAVLV), 380–400 (IMMKITIFISKGNLWSIIYVI), and 466–486 (NIIYIYNSIHITCGAVYVIVH).

To yeast YER187w. Monomer.

It is found in the cell membrane. Functionally, kills sensitive strains of yeast. In Saccharomyces cerevisiae (Baker's yeast), this protein is Killer toxin KHS (KHS1).